A 505-amino-acid chain; its full sequence is Maturase K (505 aa).

It belongs to the intron maturase 2 family. MatK subfamily.

It localises to the plastid. The protein localises to the chloroplast. Functionally, usually encoded in the trnK tRNA gene intron. Probably assists in splicing its own and other chloroplast group II introns. This Idiospermum australiense (Ribbonwood tree) protein is Maturase K.